The sequence spans 245 residues: UDP-2,3-diacylglucosamine hydrolase (245 aa).

Mn(2+)-binding residues include D8, H10, D41, N80, and H115. 80–81 lines the substrate pocket; the sequence is NR. Substrate is bound by residues D123, S161, K165, K168, and H196. Residues H196 and H198 each contribute to the Mn(2+) site.

The protein belongs to the LpxH family. Mn(2+) serves as cofactor.

The protein resides in the cell inner membrane. The enzyme catalyses UDP-2-N,3-O-bis[(3R)-3-hydroxytetradecanoyl]-alpha-D-glucosamine + H2O = 2-N,3-O-bis[(3R)-3-hydroxytetradecanoyl]-alpha-D-glucosaminyl 1-phosphate + UMP + 2 H(+). It participates in glycolipid biosynthesis; lipid IV(A) biosynthesis; lipid IV(A) from (3R)-3-hydroxytetradecanoyl-[acyl-carrier-protein] and UDP-N-acetyl-alpha-D-glucosamine: step 4/6. Hydrolyzes the pyrophosphate bond of UDP-2,3-diacylglucosamine to yield 2,3-diacylglucosamine 1-phosphate (lipid X) and UMP by catalyzing the attack of water at the alpha-P atom. Involved in the biosynthesis of lipid A, a phosphorylated glycolipid that anchors the lipopolysaccharide to the outer membrane of the cell. The protein is UDP-2,3-diacylglucosamine hydrolase of Psychromonas ingrahamii (strain DSM 17664 / CCUG 51855 / 37).